A 298-amino-acid polypeptide reads, in one-letter code: ADP/ATP translocase 1 (298 aa).

Topologically, residues 1-7 are mitochondrial intermembrane; it reads MGDHAWS. Gly-2 is modified (N-acetylglycine). One copy of the Solcar 1 repeat lies at 6-98; it reads WSFLKDFLAG…FAFKDKYKQL (93 aa). Position 7 is a phosphoserine (Ser-7). Residues 8 to 37 traverse the membrane as a helical segment; it reads FLKDFLAGGVAAAVSKTAVAPIERVKLLLQ. Over 38–74 the chain is Mitochondrial matrix; sequence VQHASKQISAEKQYKGIIDCVVRIPKEQGFLSFWRGN. Residue Lys-52 is modified to N6,N6,N6-trimethyllysine. The helical transmembrane segment at 75-99 threads the bilayer; that stretch reads LANVIRYFPTQALNFAFKDKYKQLF. ADP contacts are provided by Arg-80 and Lys-92. Residues 100 to 109 are Mitochondrial intermembrane-facing; sequence LGGVDRHKQF. The helical transmembrane segment at 110 to 130 threads the bilayer; that stretch reads WRYFAGNLASGGAAGATSLCF. Solcar repeat units lie at residues 111–201 and 212–297; these read RYFA…AKGM and VSWM…IKKY. Topologically, residues 131–178 are mitochondrial matrix; it reads VYPLDFARTRLAADVGKGAAQREFHGLGDCIIKIFKSDGLRGLYQGFN. An N6-succinyllysine modification is found at Lys-147. Cys-160 is subject to S-nitrosocysteine. Residues 179 to 199 form a helical membrane-spanning segment; the sequence is VSVQGIIIYRAAYFGVYDTAK. At 200–210 the chain is on the mitochondrial intermembrane side; it reads GMLPDPKNVHI. Residues 211 to 231 form a helical membrane-spanning segment; it reads FVSWMIAQSVTAVAGLVSYPF. Residues 232–273 are Mitochondrial matrix-facing; sequence DTVRRRMMMQSGRKGADIMYTGTVDCWRKIAKDEGAKAFFKG. Arg-235 contributes to the ADP binding site. The important for transport activity stretch occupies residues 235-240; sequence RRRMMM. The short motif at 235–240 is the Nucleotide carrier signature motif element; it reads RRRMMM. An N6-succinyllysine mark is found at Lys-245 and Lys-272. Residues 274–291 form a helical membrane-spanning segment; it reads AWSNVLRGMGGAFVLVLY. Residues 292–298 lie on the Mitochondrial intermembrane side of the membrane; that stretch reads DEIKKYV.

This sequence belongs to the mitochondrial carrier (TC 2.A.29) family. In terms of assembly, monomer. Found in a complex with ARL2, ARL2BP and SLC25A4/ANT1. Interacts with ARL2BP. Interacts with ARHGAP11B, thereby inhibiting the mitochondrial permeability transition pore (mPTP). Interacts with TIMM44; leading to inhibit the presequence translocase TIMM23, thereby promoting stabilization of PINK1. (Microbial infection) Interacts with HIV-1 Vpr. In terms of processing, under cell death induction, transglutaminated by TGM2. Transglutamination leads to formation of covalent cross-links between a glutamine and the epsilon-amino group of a lysine residue, forming polymers. As to expression, expressed in erythrocytes (at protein level).

It localises to the mitochondrion inner membrane. The protein localises to the membrane. It catalyses the reaction ADP(in) + ATP(out) = ADP(out) + ATP(in). The enzyme catalyses H(+)(in) = H(+)(out). The matrix-open state (m-state) is inhibited by the membrane-permeable bongkrekic acid (BKA). The cytoplasmic-open state (c-state) is inhibited by the membrane-impermeable toxic inhibitor carboxyatractyloside (CATR). Proton transporter activity is inhibited by ADP:ATP antiporter activity. In terms of biological role, ADP:ATP antiporter that mediates import of ADP into the mitochondrial matrix for ATP synthesis, and export of ATP out to fuel the cell. Cycles between the cytoplasmic-open state (c-state) and the matrix-open state (m-state): operates by the alternating access mechanism with a single substrate-binding site intermittently exposed to either the cytosolic (c-state) or matrix (m-state) side of the inner mitochondrial membrane. In addition to its ADP:ATP antiporter activity, also involved in mitochondrial uncoupling and mitochondrial permeability transition pore (mPTP) activity. Plays a role in mitochondrial uncoupling by acting as a proton transporter: proton transport uncouples the proton flows via the electron transport chain and ATP synthase to reduce the efficiency of ATP production and cause mitochondrial thermogenesis. Proton transporter activity is inhibited by ADP:ATP antiporter activity, suggesting that SLC25A4/ANT1 acts as a master regulator of mitochondrial energy output by maintaining a delicate balance between ATP production (ADP:ATP antiporter activity) and thermogenesis (proton transporter activity). Proton transporter activity requires free fatty acids as cofactor, but does not transport it. Also plays a key role in mPTP opening, a non-specific pore that enables free passage of the mitochondrial membranes to solutes of up to 1.5 kDa, and which contributes to cell death. It is however unclear if SLC25A4/ANT1 constitutes a pore-forming component of mPTP or regulates it. Acts as a regulator of mitophagy independently of ADP:ATP antiporter activity: promotes mitophagy via interaction with TIMM44, leading to inhibit the presequence translocase TIMM23, thereby promoting stabilization of PINK1. This is ADP/ATP translocase 1 from Homo sapiens (Human).